A 95-amino-acid chain; its full sequence is Small ubiquitin-related modifier 2-A (95 aa).

Lysine 11 participates in a covalent cross-link: Glycyl lysine isopeptide (Lys-Gly) (interchain with G-Cter in SUMO). A Ubiquitin-like domain is found at 16-95 (DHINLKVAGQ…VFQQQTGGSF (80 aa)). Glycine 93 is covalently cross-linked (Glycyl lysine isopeptide (Gly-Lys) (interchain with K-? in acceptor proteins)). The propeptide occupies 94 to 95 (SF).

The protein belongs to the ubiquitin family. SUMO subfamily. Interacts with sae2 and ube2i. Covalently attached to a number of proteins, including top2. In terms of processing, polymeric chains can be formed through Lys-11 cross-linking. Post-translationally, cleavage of precursor form by a sentrin-specific protease is necessary for function.

It localises to the nucleus. Its function is as follows. Ubiquitin-like protein that can be covalently attached to proteins as a monomer or as a lysine-linked polymer. Covalent attachment via an isopeptide bond to its substrates requires prior activation by the E1 complex sae1-sae2 and linkage to the E2 enzyme ube2i, and can be promoted by an E3 ligase such as pias1-4. This post-translational modification on lysine residues of proteins plays a crucial role in a number of cellular processes such as nuclear transport, DNA replication and repair, mitosis and signal transduction. Polymeric sumo2 chains are also susceptible to polyubiquitination which functions as a signal for proteasomal degradation of modified proteins. In Xenopus laevis (African clawed frog), this protein is Small ubiquitin-related modifier 2-A (sumo2-a).